Reading from the N-terminus, the 446-residue chain is Na(+)-translocating NADH-quinone reductase subunit A (446 aa).

This sequence belongs to the NqrA family. In terms of assembly, composed of six subunits; NqrA, NqrB, NqrC, NqrD, NqrE and NqrF.

The enzyme catalyses a ubiquinone + n Na(+)(in) + NADH + H(+) = a ubiquinol + n Na(+)(out) + NAD(+). NQR complex catalyzes the reduction of ubiquinone-1 to ubiquinol by two successive reactions, coupled with the transport of Na(+) ions from the cytoplasm to the periplasm. NqrA to NqrE are probably involved in the second step, the conversion of ubisemiquinone to ubiquinol. In Vibrio parahaemolyticus serotype O3:K6 (strain RIMD 2210633), this protein is Na(+)-translocating NADH-quinone reductase subunit A.